A 34-amino-acid chain; its full sequence is Protamine-Z1/Z2 (34 aa).

Residues 1–34 form a disordered region; it reads PRRRRRSSRPVRRRRRYRRSTVARRRRRVVRRRR.

In terms of tissue distribution, testis.

The protein localises to the nucleus. The protein resides in the chromosome. Protamines substitute for histones in the chromatin of sperm during the haploid phase of spermatogenesis. They compact sperm DNA into a highly condensed, stable and inactive complex. This chain is Protamine-Z1/Z2, found in Thunnus thynnus (Atlantic bluefin tuna).